Reading from the N-terminus, the 256-residue chain is MTDQRKGSDAEPTTHFGFKNVPESQKAEKVAEVFHSVAAKYDLMNDVLSGGMHRLWKRFTIELSGVRTGNRVLDIAGGTGDLAAKFSKLVGPTGQVVLADINGSMLKVGRDRLLDKGVAGNIEFVQADAEKLPFPDNHFDCVTIAFGLRNVTHKEDAIRSMLRVLKPGGRLLVLEFSKPTNALMSKVYDTYSFAFMPLMGKLITNDAESYRYLAESIRMHPDQETLKSMMVEAGFDRVTYHNMTSGIVALHRGIKP.

Residues T79, D100, and 128 to 129 each bind S-adenosyl-L-methionine; that span reads DA.

Belongs to the class I-like SAM-binding methyltransferase superfamily. MenG/UbiE family.

The enzyme catalyses a 2-demethylmenaquinol + S-adenosyl-L-methionine = a menaquinol + S-adenosyl-L-homocysteine + H(+). It catalyses the reaction a 2-methoxy-6-(all-trans-polyprenyl)benzene-1,4-diol + S-adenosyl-L-methionine = a 5-methoxy-2-methyl-3-(all-trans-polyprenyl)benzene-1,4-diol + S-adenosyl-L-homocysteine + H(+). It functions in the pathway quinol/quinone metabolism; menaquinone biosynthesis; menaquinol from 1,4-dihydroxy-2-naphthoate: step 2/2. Its pathway is cofactor biosynthesis; ubiquinone biosynthesis. Methyltransferase required for the conversion of demethylmenaquinol (DMKH2) to menaquinol (MKH2) and the conversion of 2-polyprenyl-6-methoxy-1,4-benzoquinol (DDMQH2) to 2-polyprenyl-3-methyl-6-methoxy-1,4-benzoquinol (DMQH2). The sequence is that of Ubiquinone/menaquinone biosynthesis C-methyltransferase UbiE from Pseudomonas fluorescens (strain SBW25).